A 265-amino-acid polypeptide reads, in one-letter code: 3-methyl-2-oxobutanoate hydroxymethyltransferase (265 aa).

Asp44 and Asp83 together coordinate Mg(2+). Residues 44-45 (DS), Asp83, and Lys113 contribute to the 3-methyl-2-oxobutanoate site. Glu115 is a Mg(2+) binding site. Glu183 (proton acceptor) is an active-site residue.

Belongs to the PanB family. In terms of assembly, homodecamer; pentamer of dimers. Mg(2+) serves as cofactor.

The protein localises to the cytoplasm. The enzyme catalyses 3-methyl-2-oxobutanoate + (6R)-5,10-methylene-5,6,7,8-tetrahydrofolate + H2O = 2-dehydropantoate + (6S)-5,6,7,8-tetrahydrofolate. It participates in cofactor biosynthesis; (R)-pantothenate biosynthesis; (R)-pantoate from 3-methyl-2-oxobutanoate: step 1/2. Catalyzes the reversible reaction in which hydroxymethyl group from 5,10-methylenetetrahydrofolate is transferred onto alpha-ketoisovalerate to form ketopantoate. This chain is 3-methyl-2-oxobutanoate hydroxymethyltransferase, found in Leptospira borgpetersenii serovar Hardjo-bovis (strain L550).